We begin with the raw amino-acid sequence, 360 residues long: Nodulin-44 (360 aa).

The first 23 residues, 1–23 (MEEKILMRVIVITVFLFIGAATA), serve as a signal peptide directing secretion. Disordered regions lie at residues 123-148 (FSPRGRRSKLDNHQTDAGTLGKVIPL) and 228-249 (FSPRGRRSKLDNHQTDAGTLGR).

The protein belongs to the nodulin 20 family.

This chain is Nodulin-44, found in Glycine max (Soybean).